The following is an 874-amino-acid chain: Alanine--tRNA ligase (874 aa).

Residues histidine 562, histidine 566, cysteine 664, and histidine 668 each coordinate Zn(2+).

This sequence belongs to the class-II aminoacyl-tRNA synthetase family. Zn(2+) is required as a cofactor.

The protein resides in the cytoplasm. The enzyme catalyses tRNA(Ala) + L-alanine + ATP = L-alanyl-tRNA(Ala) + AMP + diphosphate. In terms of biological role, catalyzes the attachment of alanine to tRNA(Ala) in a two-step reaction: alanine is first activated by ATP to form Ala-AMP and then transferred to the acceptor end of tRNA(Ala). Also edits incorrectly charged Ser-tRNA(Ala) and Gly-tRNA(Ala) via its editing domain. This Shewanella loihica (strain ATCC BAA-1088 / PV-4) protein is Alanine--tRNA ligase.